The following is a 432-amino-acid chain: Adenylosuccinate synthetase (432 aa).

Residues 13-19 (GDEGKGK) and 41-43 (GHT) contribute to the GTP site. Aspartate 14 serves as the catalytic Proton acceptor. Residues aspartate 14 and glycine 41 each contribute to the Mg(2+) site. IMP contacts are provided by residues 14 to 17 (DEGK), 39 to 42 (NAGH), threonine 130, arginine 144, glutamine 225, threonine 240, and arginine 304. Histidine 42 acts as the Proton donor in catalysis. 300 to 306 (ATTGRRR) is a binding site for substrate. GTP-binding positions include arginine 306, 332–334 (KLD), and 415–417 (STG).

It belongs to the adenylosuccinate synthetase family. Homodimer. Mg(2+) is required as a cofactor.

It localises to the cytoplasm. The enzyme catalyses IMP + L-aspartate + GTP = N(6)-(1,2-dicarboxyethyl)-AMP + GDP + phosphate + 2 H(+). Its pathway is purine metabolism; AMP biosynthesis via de novo pathway; AMP from IMP: step 1/2. Functionally, plays an important role in the de novo pathway of purine nucleotide biosynthesis. Catalyzes the first committed step in the biosynthesis of AMP from IMP. This Salmonella choleraesuis (strain SC-B67) protein is Adenylosuccinate synthetase.